The chain runs to 293 residues: Fructose-bisphosphate aldolase class 1 (293 aa).

The Proton acceptor role is filled by Glu-176. Lys-211 acts as the Schiff-base intermediate with dihydroxyacetone-P in catalysis.

Belongs to the class I fructose-bisphosphate aldolase family.

The enzyme catalyses beta-D-fructose 1,6-bisphosphate = D-glyceraldehyde 3-phosphate + dihydroxyacetone phosphate. It participates in carbohydrate degradation; glycolysis; D-glyceraldehyde 3-phosphate and glycerone phosphate from D-glucose: step 4/4. In Porphyromonas gingivalis (strain ATCC 33277 / DSM 20709 / CIP 103683 / JCM 12257 / NCTC 11834 / 2561), this protein is Fructose-bisphosphate aldolase class 1.